The primary structure comprises 538 residues: L-aspartate oxidase (538 aa).

Residues 14-17 (SGAA), K36, 43-50 (STYWAQGG), and D223 each bind FAD. Residue R290 is the Proton donor/acceptor of the active site. Residues E375 and 391-392 (SL) contribute to the FAD site.

This sequence belongs to the FAD-dependent oxidoreductase 2 family. NadB subfamily. Requires FAD as cofactor.

Its subcellular location is the cytoplasm. The catalysed reaction is L-aspartate + O2 = iminosuccinate + H2O2. The protein operates within cofactor biosynthesis; NAD(+) biosynthesis; iminoaspartate from L-aspartate (oxidase route): step 1/1. Its function is as follows. Catalyzes the oxidation of L-aspartate to iminoaspartate, the first step in the de novo biosynthesis of NAD(+). This Pseudomonas aeruginosa (strain ATCC 15692 / DSM 22644 / CIP 104116 / JCM 14847 / LMG 12228 / 1C / PRS 101 / PAO1) protein is L-aspartate oxidase (nadB).